A 387-amino-acid chain; its full sequence is Acetate kinase (387 aa).

Residue Asn-14 participates in Mg(2+) binding. Lys-21 lines the ATP pocket. Residue Arg-80 participates in substrate binding. Residue Asp-137 is the Proton donor/acceptor of the active site. Residues 197–201, 271–273, and 319–323 each bind ATP; these read HLGNG, DFR, and GIGEN. Residue Glu-373 participates in Mg(2+) binding.

The protein belongs to the acetokinase family. In terms of assembly, homodimer. Mg(2+) serves as cofactor. Requires Mn(2+) as cofactor.

It localises to the cytoplasm. The enzyme catalyses acetate + ATP = acetyl phosphate + ADP. The protein operates within metabolic intermediate biosynthesis; acetyl-CoA biosynthesis; acetyl-CoA from acetate: step 1/2. Functionally, catalyzes the formation of acetyl phosphate from acetate and ATP. Can also catalyze the reverse reaction. The polypeptide is Acetate kinase (Mycobacterium avium (strain 104)).